We begin with the raw amino-acid sequence, 128 residues long: Centrosomal protein 15 (128 aa).

It localises to the cell projection. The protein resides in the cilium. May play a role in ciliary assembly. This is Centrosomal protein 15 from Homo sapiens (Human).